The chain runs to 297 residues: Putative 6-phosphogluconate dehydrogenase YqeC (297 aa).

NAD(+) is bound by residues 7-12 (GLGKMG) and asparagine 94. Residues asparagine 94 and 120–122 (SGG) each bind substrate. Catalysis depends on lysine 170, which acts as the Proton acceptor. A substrate-binding site is contributed by 173-174 (HN). Catalysis depends on glutamate 177, which acts as the Proton donor. Residues tyrosine 178 and arginine 268 each coordinate substrate.

This sequence belongs to the 6-phosphogluconate dehydrogenase family.

In terms of biological role, may act as NAD-dependent 6-P-gluconate dehydrogenase. In Bacillus subtilis (strain 168), this protein is Putative 6-phosphogluconate dehydrogenase YqeC (yqeC).